Here is a 185-residue protein sequence, read N- to C-terminus: Large ribosomal subunit protein uL5 (185 aa).

This sequence belongs to the universal ribosomal protein uL5 family. Part of the 50S ribosomal subunit; part of the 5S rRNA/L5/L18/L25 subcomplex. Contacts the 5S rRNA and the P site tRNA. Forms a bridge to the 30S subunit in the 70S ribosome.

Its function is as follows. This is one of the proteins that bind and probably mediate the attachment of the 5S RNA into the large ribosomal subunit, where it forms part of the central protuberance. In the 70S ribosome it contacts protein S13 of the 30S subunit (bridge B1b), connecting the 2 subunits; this bridge is implicated in subunit movement. Contacts the P site tRNA; the 5S rRNA and some of its associated proteins might help stabilize positioning of ribosome-bound tRNAs. The chain is Large ribosomal subunit protein uL5 from Bradyrhizobium sp. (strain BTAi1 / ATCC BAA-1182).